A 145-amino-acid polypeptide reads, in one-letter code: Peptide methionine sulfoxide reductase MsrB (145 aa).

The 124-residue stretch at 4-127 folds into the MsrB domain; sequence SDELKQRIGD…NSAALKFIPY (124 aa). Catalysis depends on Cys116, which acts as the Nucleophile.

The protein belongs to the MsrB Met sulfoxide reductase family.

The catalysed reaction is L-methionyl-[protein] + [thioredoxin]-disulfide + H2O = L-methionyl-(R)-S-oxide-[protein] + [thioredoxin]-dithiol. This chain is Peptide methionine sulfoxide reductase MsrB, found in Streptococcus pyogenes serotype M18 (strain MGAS8232).